Here is a 38-residue protein sequence, read N- to C-terminus: Potassium channel toxin alpha-KTx 3.11 (38 aa).

3 disulfides stabilise this stretch: Cys-8/Cys-28, Cys-14/Cys-33, and Cys-18/Cys-35.

It belongs to the short scorpion toxin superfamily. Potassium channel inhibitor family. Alpha-KTx 03 subfamily. As to expression, expressed by the venom gland.

The protein localises to the secreted. Its function is as follows. Blocks the voltage-gated potassium channel Kv1.3/KCNA3 (IC(50)=7.2 nM). Correnti and colleagues have also shown that this toxin inhibits Kv1.1/KCNA1, which is different from Abdel-Mottaleb and colleagues conclusions. The chain is Potassium channel toxin alpha-KTx 3.11 from Odontobuthus doriae (Yellow Iranian scorpion).